A 3912-amino-acid chain; its full sequence is Ubiquitin carboxyl-terminal hydrolase puf (3912 aa).

5 disordered regions span residues 101 to 172 (AQQQ…HKSH), 518 to 590 (NVTA…ISPE), 660 to 688 (DVPSSDEADGEADGDGEGELLADSDECSD), 851 to 878 (VVSGGKQHHSPKASQGSSTSGSTPVQPS), and 1491 to 1611 (SRRG…PALS). Over residues 106–133 (EQQRDEASAQAEAKESSAPAEEPKKEEP) the composition is skewed to basic and acidic residues. The segment covering 134–143 (SGSAGEEAQG) has biased composition (low complexity). The segment covering 150-164 (KKPPVGPCTPPPPQT) has biased composition (pro residues). Low complexity predominate over residues 522-532 (SSSDSGSIEGS). Basic and acidic residues predominate over residues 576 to 585 (ICDPTTEKGK). The segment covering 660–687 (DVPSSDEADGEADGDGEGELLADSDECS) has biased composition (acidic residues). A compositionally biased stretch (polar residues) spans 862 to 876 (KASQGSSTSGSTPVQ). Positions 1511–1520 (VKKSSMGRRR) are enriched in basic residues. The span at 1550 to 1567 (TPSTGLQDVETEASSSSG) shows a compositional bias: polar residues. The segment covering 1583–1594 (KGETFEQEKERP) has biased composition (basic and acidic residues). Over residues 1600-1609 (PPSPTPPPPA) the composition is skewed to pro residues. Residues 2015-2380 (VGLTNLGATC…SAYMLFYERR (366 aa)) form the USP domain. C2024 acts as the Nucleophile in catalysis. Basic and acidic residues predominate over residues 2249–2263 (YKEERERRQKEKEGA). Residues 2249 to 2274 (YKEERERRQKEKEGADGSGDGNDNEK) form a disordered region. H2305 functions as the Proton acceptor in the catalytic mechanism. Disordered regions lie at residues 2391-2529 (ELLV…TSKA), 3322-3344 (QQSQSQTQTPQSPQQKEKQLQQQ), 3657-3776 (SERF…EERE), and 3800-3912 (ASVP…PTQI). 2 stretches are compositionally biased toward basic and acidic residues: residues 2402–2413 (VEEKSEAEEPTK) and 2433–2488 (EKDK…EKPT). Positions 2504–2523 (NCDNHQQNNNSNSKASNDQQ) are enriched in low complexity. Over residues 3657 to 3703 (SERFRKESERDPFPNKKQKRDSQKIKEKEHPQPESEKETSTENDKPS) the composition is skewed to basic and acidic residues. The segment covering 3706–3721 (SMESSGNAEQATDSTK) has biased composition (polar residues). Residues 3741-3751 (SDDETELEDEL) are compositionally biased toward acidic residues. Over residues 3766–3776 (TAQDRVNEERE) the composition is skewed to basic and acidic residues. Residues 3865 to 3877 (PKTSQTNGSQQNE) show a composition bias toward polar residues. Low complexity predominate over residues 3878 to 3912 (SPPAATSADTAPANPSPAPAAAVASTSQAASPTQI).

The protein belongs to the peptidase C19 family. In terms of assembly, interacts with Myc and ago.

Its subcellular location is the nucleus. It carries out the reaction Thiol-dependent hydrolysis of ester, thioester, amide, peptide and isopeptide bonds formed by the C-terminal Gly of ubiquitin (a 76-residue protein attached to proteins as an intracellular targeting signal).. In terms of biological role, ubiquitin hydrolase that can remove conjugated ubiquitin from target proteins and polyubiquitin chains. Essential for Myc-mediated cell growth and proliferation in developing eyes and wings. In the wing and eye, the deubiquitinating activity acts as an antagonist to the SCF E3 ubiquitin-protein ligase member archipelago (ago) to regulate Myc and CycE stability and thus control cell growth and proliferation. Also appears to regulate ago by modulating its induction by Myc. May also promote cell apoptosis in the wing imaginal disk, acting in an apoptotic pathway that appears to be largely independent of Myc. Required for preventing the activation of the immune deficiency (Imd) and Toll signaling cascades under unchallenged conditions. Also appears to be involved in modulating the differential expression of certain antimicrobial peptides (AMP) in response to infection by either Gram-positive or Gram-negative bacteria. Involved in the regulation of DNA damage repair pathways, including euchromatic site-specific double strand break (DSB) repair. The chain is Ubiquitin carboxyl-terminal hydrolase puf from Drosophila melanogaster (Fruit fly).